Here is a 362-residue protein sequence, read N- to C-terminus: Histidinol-phosphate aminotransferase (362 aa).

At Lys-222 the chain carries N6-(pyridoxal phosphate)lysine.

The protein belongs to the class-II pyridoxal-phosphate-dependent aminotransferase family. Histidinol-phosphate aminotransferase subfamily. Homodimer. The cofactor is pyridoxal 5'-phosphate.

It catalyses the reaction L-histidinol phosphate + 2-oxoglutarate = 3-(imidazol-4-yl)-2-oxopropyl phosphate + L-glutamate. It functions in the pathway amino-acid biosynthesis; L-histidine biosynthesis; L-histidine from 5-phospho-alpha-D-ribose 1-diphosphate: step 7/9. This chain is Histidinol-phosphate aminotransferase, found in Shewanella amazonensis (strain ATCC BAA-1098 / SB2B).